The primary structure comprises 371 residues: Aspartate-semialdehyde dehydrogenase (371 aa).

NADP(+) contacts are provided by residues 11-14 (RGMV), 38-39 (TS), and glutamine 75. Arginine 104 is a phosphate binding site. Cysteine 137 serves as the catalytic Acyl-thioester intermediate. A substrate-binding site is contributed by glutamine 164. 167-168 (SG) contacts NADP(+). A substrate-binding site is contributed by glutamate 243. Lysine 246 contacts phosphate. Arginine 269 provides a ligand contact to substrate. Residue histidine 276 is the Proton acceptor of the active site. Glutamine 352 is a binding site for NADP(+).

It belongs to the aspartate-semialdehyde dehydrogenase family. Homodimer.

It catalyses the reaction L-aspartate 4-semialdehyde + phosphate + NADP(+) = 4-phospho-L-aspartate + NADPH + H(+). Its pathway is amino-acid biosynthesis; L-lysine biosynthesis via DAP pathway; (S)-tetrahydrodipicolinate from L-aspartate: step 2/4. The protein operates within amino-acid biosynthesis; L-methionine biosynthesis via de novo pathway; L-homoserine from L-aspartate: step 2/3. It functions in the pathway amino-acid biosynthesis; L-threonine biosynthesis; L-threonine from L-aspartate: step 2/5. In terms of biological role, catalyzes the NADPH-dependent formation of L-aspartate-semialdehyde (L-ASA) by the reductive dephosphorylation of L-aspartyl-4-phosphate. The sequence is that of Aspartate-semialdehyde dehydrogenase from Buchnera aphidicola subsp. Schizaphis graminum (strain Sg).